The following is a 209-amino-acid chain: Putative BTB/POZ domain-containing protein At2g40450 (209 aa).

The BTB domain maps to 24–98 (ADVRLKAGDS…IYRVDGSICS (75 aa)).

It functions in the pathway protein modification; protein ubiquitination. In terms of biological role, may act as a substrate-specific adapter of an E3 ubiquitin-protein ligase complex (CUL3-RBX1-BTB) which mediates the ubiquitination and subsequent proteasomal degradation of target proteins. This is Putative BTB/POZ domain-containing protein At2g40450 from Arabidopsis thaliana (Mouse-ear cress).